We begin with the raw amino-acid sequence, 232 residues long: MLKPSVTSAPTADMATLTVVQPLTLDRDVARAIELLEKLQESGEVPVHKLQSLKKVLQSEFCTAIREVYQYMHETITVNGCPEFRARATAKATVAAFAASEGHSHPRVVELPKTDEGLGFNVMGGKEQNSPIYISRIIPGGVAERHGGLKRGDQLLSVNGVSVEGEHHEKAVELLKAAKDSVKLVVRYTPKVLEEMEARFEKLRTARRRQQQQLLIQQQQQQQQQPQQNHMS.

The Kinase interacting site signature appears at 14-28 (MATLTVVQPLTLDRD). In terms of domain architecture, L27 spans 25 to 80 (LDRDVARAIELLEKLQESGEVPVHKLQSLKKVLQSEFCTAIREVYQYMHETITVNG). One can recognise a PDZ domain in the interval 108 to 190 (VVELPKTDEG…SVKLVVRYTP (83 aa)).

It belongs to the lin-7 family. In terms of assembly, forms a complex with CASK and CASKIN1. Component of the brain-specific heterotrimeric complex (LIN-10-LIN-2-LIN-7 complex) composed of at least APBA1, CASK, and LIN7, which associates with the motor protein KIF17 to transport vesicles along microtubules. Can also interact with other modular proteins containing protein-protein interaction domains like PALS1, PALS2, MPP7, DLG1, DLG2 and DLG3 through its L27 domain. Interacts with DLG4 and GRIN2B as well as CDH1 and CTNNB1, the channels KCNJ12/Kir2.2, KCNJ4/Kir2.3 and probably KCNJ2/Kir2.1 and SLC6A12/BGT-1 via its PDZ domain. The association of LIN7A with cadherin and beta-catenin is calcium-dependent, occurs at synaptic junctions and requires the actin cytoskeleton. Interacts with EGFR, ERBB2, ERBB3 and ERBB4 with both PDZ and KID domains. Associates with KIF17 via APBA1. Interacts with HTR4. Forms a tripartite complex composed of DLG1, MPP7 and LIN7 (LIN7A or LIN7C). Interacts with MARCHF11. Ubiquitously expressed in brain and detected in lung, liver and testis (at protein level). Expression was detected only in brain.

The protein resides in the cell membrane. The protein localises to the basolateral cell membrane. It is found in the cell junction. Its subcellular location is the postsynaptic density membrane. It localises to the tight junction. In terms of biological role, plays a role in establishing and maintaining the asymmetric distribution of channels and receptors at the plasma membrane of polarized cells. Forms membrane-associated multiprotein complexes that may regulate delivery and recycling of proteins to the correct membrane domains. The tripartite complex composed of LIN7 (LIN7A, LIN7B or LIN7C), CASK and APBA1 associates with the motor protein KIF17 to transport vesicles containing N-methyl-D-aspartate (NMDA) receptor subunit NR2B along microtubules. This complex may have the potential to couple synaptic vesicle exocytosis to cell adhesion in brain. Ensures the proper localization of GRIN2B (subunit 2B of the NMDA receptor) to neuronal postsynaptic density and may function in localizing synaptic vesicles at synapses where it is recruited by beta-catenin and cadherin. Required to localize Kir2 channels, GABA transporter (SLC6A12) and EGFR/ERBB1, ERBB2, ERBB3 and ERBB4 to the basolateral membrane of epithelial cells. The protein is Protein lin-7 homolog A (Lin7a) of Rattus norvegicus (Rat).